Here is a 118-residue protein sequence, read N- to C-terminus: UPF0344 protein Aflv_2205 (118 aa).

4 helical membrane passes run 4-24 (AHITTWVVALILFVVAIALQA), 32-52 (MLHMLLRLFYILIIATGAWIL), 60-80 (FLYIVKVIVGLWVIGTMEMIL), and 96-116 (FIVAFVVVLYLGFKLPFGFSF).

The protein belongs to the UPF0344 family.

Its subcellular location is the cell membrane. This is UPF0344 protein Aflv_2205 from Anoxybacillus flavithermus (strain DSM 21510 / WK1).